A 2135-amino-acid chain; its full sequence is MPALGPALLQALWAGWVLTLQPLPPTAFTPNGTYLQHLARDPTSGTLYLGATNFLFQLSPGLQLEATVSTGPVLDSRDCLPPVMPDECPQAQPTNNPNQLLLVSPGALVVCGSVHQGVCEQRRLGQLEQLLLRPERPGDTQYVAANDPAVSTVGLVAQGLAGEPLLFVGRGYTSRGVGGGIPPITTRALWPPDPQAAFSYEETAKLAVGRLSEYSHHFVSAFARGASAYFLFLRRDLQAQSRAFRAYVSRVCLRDQHYYSYVELPLACEGGRYGLIQAAAVATSREVAHGEVLFAAFSSAAPPTVGRPPSAAAGASGASALCAFPLDEVDRLANRTRDACYTREGRAEDGTEVAYIEYDVNSDCAQLPVDTLDAYPCGSDHTPSPMASRVPLEATPILEWPGIQLTAVAVTMEDGHTIAFLGDSQGQLHRVYLGPGSDGHPYSTQSIQQGSAVSRDLTFDGTFEHLYVMTQSTLLKVPVASCAQHLDCASCLAHRDPYCGWCVLLGRCSRRSECSRGQGPEQWLWSFQPELGCLQVAAMSPANISREETREVFLSVPDLPPLWPGESYSCHFGEHQSPALLTGSGVMCPSPDPSEAPVLPRGADYVSVSVELRFGAVVIAKTSLSFYDCVAVTELRPSAQCQACVSSRWGCNWCVWQHLCTHKASCDAGPMVASHQSPLVSPDPPARGGPSPSPPTAPKALATPAPDTLPVEPGAPSTATASDISPGASPSLLSPWGPWAGSGSISSPGSTGSPLHEEPSPPSPQNGPGTAVPAPTDFRPSATPEDLLASPLSPSEVAAVPPADPGPEALHPTVPLDLPPATVPATTFPGAMGSVKPALDWLTREGGELPEADEWTGGDAPAFSTSTLLSGDGDSAELEGPPAPLILPSSLDYQYDTPGLWELEEATLGASSCPCVESVQGSTLMPVHVEREIRLLGRNLHLFQDGPGDNECVMELEGLEVVVEARVECEPPPDTQCHVTCQQHQLSYEALQPELRVGLFLRRAGRLRVDSAEGLHVVLYDCSVGHGDCSRCQTAMPQYGCVWCEGERPRCVTREACGEAEAVATQCPAPLIHSVEPLTGPVDGGTRVTIRGSNLGQHVQDVLGMVTVAGVPCAVDAQEYEVSSSLVCITGASGEEVAGATAVEVPGRGRGVSEHDFAYQDPKVHSIFPARGPRAGGTRLTLNGSKLLTGRLEDIRVVVGDQPCHLLPEQQSEQLRCETSPRPTPATLPVAVWFGATERRLQRGQFKYTLDPNITSAGPTKSFLSGGREICVRGQNLDVVQTPRIRVTVVSRMLQPSQGLGRRRRVVPETACSLGPSCSSQQFEEPCHVNSSQLITCRTPALPGLPEDPWVRVEFILDNLVFDFATLNPTPFSYEADPTLQPLNPEDPTMPFRHKPGSVFSVEGENLDLAMSKEEVVAMIGDGPCVVKTLTRHHLYCEPPVEQPLPRHHALREAPDSLPEFTVQMGNLRFSLGHVQYDGESPGAFPVAAQVGLGVGTSLLALGVIIIVLMYRRKSKQALRDYKKVQIQLENLESSVRDRCKKEFTDLMTEMTDLTSDLLGSGIPFLDYKVYAERIFFPGHRESPLHRDLGVPESRRPTVEQGLGQLSNLLNSKLFLTKFIHTLESQRTFSARDRAYVASLLTVALHGKLEYFTDILRTLLSDLVAQYVAKNPKLMLRRTETVVEKLLTNWMSICLYTFVRDSVGEPLYMLFRGIKHQVDKGPVDSVTGKAKYTLNDNRLLREDVEYRPLTLNALLAVGPGAGEAQGVPVKVLDCDTISQAKEKMLDQLYKGVPLTQRPDPRTLDVEWRSGVAGHLILSDEDVTSEVQGLWRRLNTLQHYKVPDGATVALVPCLTKHVLRENQDYVPGERTPMLEDVDEGGIRPWHLVKPSDEPEPPRPRRGSLRGGERERAKAIPEIYLTRLLSMKGTLQKFVDDLFQVILSTSRPVPLAVKYFFDLLDEQAQQHGISDQDTIHIWKTNSLPLRFWINIIKNPQFVFDVQTSDNMDAVLLVIAQTFMDACTLADHKLGRDSPINKLLYARDIPRYKRMVERYYADIRQTVPASDQEMNSVLAELSWNYSGDLGARVALHELYKYINKYYDQIITALEEDGTAQKMQLGYRLQQIAAAVENKVTDL.

Positions 1–19 are cleaved as a signal peptide; that stretch reads MPALGPALLQALWAGWVLT. One can recognise a Sema domain in the interval 20-479; that stretch reads LQPLPPTAFT…TQSTLLKVPV (460 aa). Residues 20-1490 lie on the Extracellular side of the membrane; it reads LQPLPPTAFT…SPGAFPVAAQ (1471 aa). A glycan (N-linked (GlcNAc...) asparagine) is linked at N31. 9 disulfide bridges follow: C79–C88, C111–C119, C252–C377, C268–C322, C340–C364, C482–C499, C488–C533, C491–C508, and C502–C514. N334 carries N-linked (GlcNAc...) asparagine glycosylation. A glycan (N-linked (GlcNAc...) asparagine) is linked at N543. Cysteines 570 and 588 form a disulfide. Disordered stretches follow at residues 671-829 and 849-884; these read MVAS…TTFP and LPEADEWTGGDAPAFSTSTLLSGDGDSAELEGPPAP. A compositionally biased stretch (pro residues) spans 681–697; that stretch reads SPDPPARGGPSPSPPTA. Low complexity-rich tracts occupy residues 698-710 and 734-754; these read PKALATPAPDTLP and SPWGPWAGSGSISSPGSTGSP. 3 consecutive IPT/TIG domains span residues 1070–1160, 1162–1249, and 1252–1375; these read PLIH…FAYQ, PKVH…FKYT, and PNIT…FSYE. N1183, N1253, and N1330 each carry an N-linked (GlcNAc...) asparagine glycan. A helical transmembrane segment spans residues 1491–1511; the sequence is VGLGVGTSLLALGVIIIVLMY. A coiled-coil region spans residues 1507–1539; it reads IVLMYRRKSKQALRDYKKVQIQLENLESSVRDR. At 1512–2135 the chain is on the cytoplasmic side; that stretch reads RRKSKQALRD…AAVENKVTDL (624 aa). The segment at 1883–1908 is disordered; sequence PWHLVKPSDEPEPPRPRRGSLRGGER. The segment covering 1888–1897 has biased composition (basic and acidic residues); it reads KPSDEPEPPR.

This sequence belongs to the plexin family. Monomer, and heterodimer with PLXNB2 after proteolytic processing. Binds RAC1 that has been activated by GTP binding. Interaction with SEMA4D promotes binding of cytoplasmic ligands. Interacts with PLXNA1. Interacts with ARHGEF11 and ARHGEF12. Interacts with ERBB2. Interacts with MET. Interacts with MST1R. Interacts with RRAS. Interacts with RHOD. Interacts with RND1. Interacts with NRP1 and NRP2. Phosphorylated on tyrosine residues by ERBB2 and MET upon SEMA4D binding. In terms of processing, proteolytic processing favors heterodimerization with PLXNB2 and SEMA4D binding. As to expression, highly expressed in fetal kidney, and at slightly lower levels in fetal brain, lung and liver.

The protein localises to the cell membrane. It is found in the secreted. Receptor for SEMA4D. Plays a role in GABAergic synapse development. Mediates SEMA4A- and SEMA4D-dependent inhibitory synapse development. Plays a role in RHOA activation and subsequent changes of the actin cytoskeleton. Plays a role in axon guidance, invasive growth and cell migration. The sequence is that of Plexin-B1 (PLXNB1) from Homo sapiens (Human).